Consider the following 98-residue polypeptide: Small ribosomal subunit protein bS20 (98 aa).

Basic residues predominate over residues 1–15 (MAPKKTTKKGGPKKR). A disordered region spans residues 1-21 (MAPKKTTKKGGPKKRPSAEKR).

Belongs to the bacterial ribosomal protein bS20 family.

Binds directly to 16S ribosomal RNA. This Chlamydia felis (strain Fe/C-56) (Chlamydophila felis) protein is Small ribosomal subunit protein bS20.